Consider the following 137-residue polypeptide: Small ribosomal subunit protein uS12 (137 aa).

Positions 1 to 26 (MPTINQLVRKPRQSKIKKSTSPALNK) are disordered. Positions 9-18 (RKPRQSKIKK) are enriched in basic residues.

This sequence belongs to the universal ribosomal protein uS12 family. Part of the 30S ribosomal subunit. Contacts proteins S8 and S17. May interact with IF1 in the 30S initiation complex.

Functionally, with S4 and S5 plays an important role in translational accuracy. Interacts with and stabilizes bases of the 16S rRNA that are involved in tRNA selection in the A site and with the mRNA backbone. Located at the interface of the 30S and 50S subunits, it traverses the body of the 30S subunit contacting proteins on the other side and probably holding the rRNA structure together. The combined cluster of proteins S8, S12 and S17 appears to hold together the shoulder and platform of the 30S subunit. This chain is Small ribosomal subunit protein uS12, found in Listeria innocua serovar 6a (strain ATCC BAA-680 / CLIP 11262).